We begin with the raw amino-acid sequence, 124 residues long: Fluoride-specific ion channel FluC (124 aa).

3 consecutive transmembrane segments (helical) span residues Leu-20 to Val-40, Ile-60 to Ser-80, and Val-102 to Ser-122. Gly-74 and Thr-77 together coordinate Na(+).

It belongs to the fluoride channel Fluc/FEX (TC 1.A.43) family.

It localises to the cell inner membrane. It catalyses the reaction fluoride(in) = fluoride(out). With respect to regulation, na(+) is not transported, but it plays an essential structural role and its presence is essential for fluoride channel function. Functionally, fluoride-specific ion channel. Important for reducing fluoride concentration in the cell, thus reducing its toxicity. This is Fluoride-specific ion channel FluC from Shewanella frigidimarina (strain NCIMB 400).